The chain runs to 358 residues: Peroxidase 12 (358 aa).

The N-terminal stretch at 1 to 31 (MTKAYSTRVLTFLILISLMAVTLNLFPTVEA) is a signal peptide. Disulfide bonds link C53/C134, C86/C91, C140/C335, and C220/C247. The active-site Proton acceptor is the H84. Residues D85, V88, G90, E92, and S94 each coordinate Ca(2+). P183 contacts substrate. N-linked (GlcNAc...) asparagine glycans are attached at residues N188 and N202. Position 213 (H213) interacts with heme b. T214 is a Ca(2+) binding site. N-linked (GlcNAc...) asparagine glycosylation is present at N251. D259, S262, and D267 together coordinate Ca(2+). N334 carries N-linked (GlcNAc...) asparagine glycosylation.

The protein belongs to the peroxidase family. Classical plant (class III) peroxidase subfamily. It depends on heme b as a cofactor. Ca(2+) serves as cofactor. Expressed in roots and leaves.

Its subcellular location is the secreted. The protein resides in the vacuole. The enzyme catalyses 2 a phenolic donor + H2O2 = 2 a phenolic radical donor + 2 H2O. Its function is as follows. Removal of H(2)O(2), oxidation of toxic reductants, biosynthesis and degradation of lignin, suberization, auxin catabolism, response to environmental stresses such as wounding, pathogen attack and oxidative stress. These functions might be dependent on each isozyme/isoform in each plant tissue. Exhibits a Ca(2+)-pectate binding affinity which could be interpreted in vivo as a specificity to interact with the pectic structure of the cell wall. The sequence is that of Peroxidase 12 (PER12) from Arabidopsis thaliana (Mouse-ear cress).